The chain runs to 350 residues: Purine-rich element-binding protein gamma (350 aa).

Disordered stretches follow at residues 1 to 59 and 136 to 172; these read MERA…GTSE and GHRQEHGQSKEQVSRRRQKHSAPSPPVSVGSEEHPHS. Residues 9 to 27 show a composition bias toward gly residues; sequence GGGSGGGRGRGGKNVGGPG. Polar residues predominate over residues 47–59; that stretch reads ASATPNQSGGTSE. Residues 54–296 mediate DNA binding; the sequence is SGGTSEIQEL…GIFLKVSEVR (243 aa). Positions 137 to 149 are enriched in basic and acidic residues; the sequence is HRQEHGQSKEQVS. S163, S166, and S342 each carry phosphoserine.

Belongs to the PUR DNA-binding protein family. In terms of tissue distribution, isoform 1 is expressed in testis. Isoform 2 is expressed in blastocyst and kidney.

The protein resides in the nucleus. The polypeptide is Purine-rich element-binding protein gamma (Purg) (Mus musculus (Mouse)).